The following is a 458-amino-acid chain: Ribosomal protein uS12 methylthiotransferase RimO (458 aa).

The MTTase N-terminal domain maps to 8 to 119; it reads PTVAFAHLGC…IVDVLQRVEV (112 aa). [4Fe-4S] cluster-binding residues include Cys-17, Cys-53, Cys-82, Cys-157, Cys-161, and Cys-164. The 230-residue stretch at 143 to 372 folds into the Radical SAM core domain; it reads TTDQAVAFLK…MALQQPISAE (230 aa). The region spanning 375–446 is the TRAM domain; the sequence is SRWVGRTVDV…IYDLNGQMVG (72 aa).

This sequence belongs to the methylthiotransferase family. RimO subfamily. It depends on [4Fe-4S] cluster as a cofactor.

The protein localises to the cytoplasm. It catalyses the reaction L-aspartate(89)-[ribosomal protein uS12]-hydrogen + (sulfur carrier)-SH + AH2 + 2 S-adenosyl-L-methionine = 3-methylsulfanyl-L-aspartate(89)-[ribosomal protein uS12]-hydrogen + (sulfur carrier)-H + 5'-deoxyadenosine + L-methionine + A + S-adenosyl-L-homocysteine + 2 H(+). Functionally, catalyzes the methylthiolation of an aspartic acid residue of ribosomal protein uS12. The chain is Ribosomal protein uS12 methylthiotransferase RimO from Synechococcus sp. (strain CC9605).